Consider the following 295-residue polypeptide: Protein FAM110A (295 aa).

Disordered stretches follow at residues 117-148 and 160-191; these read PVSP…PPSI and PASP…KSDL. 2 stretches are compositionally biased toward pro residues: residues 138 to 147 and 160 to 171; these read LATPPRPPPS and PASPIQPCPSPG.

This sequence belongs to the FAM110 family. As to quaternary structure, may interact with CSPP1.

Its subcellular location is the cytoplasm. It localises to the cytoskeleton. The protein localises to the microtubule organizing center. The protein resides in the centrosome. It is found in the spindle pole. This is Protein FAM110A (FAM110A) from Bos taurus (Bovine).